The following is a 578-amino-acid chain: Proline--tRNA ligase (578 aa).

It belongs to the class-II aminoacyl-tRNA synthetase family. ProS type 1 subfamily. In terms of assembly, homodimer.

The protein resides in the cytoplasm. It carries out the reaction tRNA(Pro) + L-proline + ATP = L-prolyl-tRNA(Pro) + AMP + diphosphate. In terms of biological role, catalyzes the attachment of proline to tRNA(Pro) in a two-step reaction: proline is first activated by ATP to form Pro-AMP and then transferred to the acceptor end of tRNA(Pro). As ProRS can inadvertently accommodate and process non-cognate amino acids such as alanine and cysteine, to avoid such errors it has two additional distinct editing activities against alanine. One activity is designated as 'pretransfer' editing and involves the tRNA(Pro)-independent hydrolysis of activated Ala-AMP. The other activity is designated 'posttransfer' editing and involves deacylation of mischarged Ala-tRNA(Pro). The misacylated Cys-tRNA(Pro) is not edited by ProRS. In Burkholderia pseudomallei (strain 668), this protein is Proline--tRNA ligase.